The following is a 1218-amino-acid chain: Sodium bicarbonate cotransporter 3 (1218 aa).

Disordered stretches follow at residues 1–31 (MEADGAGEQMRPLLTRGPDEEAVVDLGKTSS) and 53–99 (HVPF…SQRV). Topologically, residues 1–612 (MEADGAGEQM…DFKDALSLQC (612 aa)) are extracellular. Ser57, Ser60, Ser89, and Ser155 each carry phosphoserine. A compositionally biased stretch (basic residues) spans 60 to 77 (SRRRHRHRGHKHHHRRRK). The segment covering 78–90 (DKDSDKEDGRESP) has biased composition (basic and acidic residues). Asn176 carries N-linked (GlcNAc...) asparagine glycosylation. Phosphoserine occurs at positions 238, 247, and 263. N-linked (GlcNAc...) asparagine glycosylation is present at Asn274. Disordered stretches follow at residues 294–350 (SRAG…DIPR), 364–412 (KGQE…ENST), and 536–577 (SIRI…HAGP). Pro residues predominate over residues 308 to 318 (VPTPQNSPPSS). Residues 319–337 (PSLSRLTSRSSQQTQPQAP) are compositionally biased toward low complexity. Residues 383–396 (SPQSAPGNLDSSKS) are compositionally biased toward polar residues. Ser386, Ser404, and Ser407 each carry phosphoserine. Residue Asn410 is glycosylated (N-linked (GlcNAc...) asparagine). A phosphoserine mark is found at Ser411 and Ser560. Residues 567–576 (PPKEADHHAG) show a composition bias toward basic and acidic residues. Residues 613–633 (LASILFLYCACMSPVITFGGL) traverse the membrane as a helical segment. Residues 634 to 641 (LGEATEGR) lie on the Cytoplasmic side of the membrane. A helical transmembrane segment spans residues 642-662 (ISAIESLFGASLTGIAYSLFA). Residues 663–699 (GQPLTILGSTGPVLVFEKILFKFCRDYHLSYLSLRTS) lie on the Extracellular side of the membrane. A helical membrane pass occupies residues 700 to 720 (IGLWTSFLCIVLVATDASSLV). Over 721 to 729 (CYITRFTEE) the chain is Cytoplasmic. The helical transmembrane segment at 730–750 (AFAALICIIFIYEALEKLFHL) threads the bilayer. The Extracellular portion of the chain corresponds to 751-821 (GEIYAFNMHN…MFVGSACGPH (71 aa)). Cys770 and Cys772 are joined by a disulfide. Residues Asn780, Asn790, and Asn800 are each glycosylated (N-linked (GlcNAc...) asparagine). Cys806 and Cys818 are disulfide-bonded. A helical membrane pass occupies residues 822-842 (GPYVPDVLFWCVVLFFTTFFL). At 843-865 (SSFLKQFKTKRYFPTKVRSTISD) the chain is on the cytoplasmic side. A helical transmembrane segment spans residues 866–886 (FAVFLTIVIMVAIDYLVGIPS). Residues 887–912 (PKLHVPEKFEPTDPSRGWIISPLGDN) lie on the Extracellular side of the membrane. The helical transmembrane segment at 913–933 (PWWTLLIAAVPALLCTILIFM) threads the bilayer. Over 934–958 (DQQITAVIINRKEHKLKKGAGYHLD) the chain is Cytoplasmic. A helical transmembrane segment spans residues 959–979 (LLMVAVMLGVCSIMGLPWFVA). Residues 980 to 1015 (ATVLSISHVNSLKVESECSAPGEQPKFLGIREQRVT) lie on the Extracellular side of the membrane. Residues 1012–1135 (QRVTGLMIFI…MDLCFTKREL (124 aa)) form an essential for cell membrane localization and transport activity region. The helical transmembrane segment at 1016-1036 (GLMIFILMGLSVFMTSVLKFI) threads the bilayer. Residues 1037 to 1038 (PM) lie on the Cytoplasmic side of the membrane. A helical membrane pass occupies residues 1039 to 1059 (PVLYGVFLYMGVSSLKGIQFF). Residues 1060-1096 (DRIKLFGMPAKHQPDLIYLRYVPLWKVHVFTVVQLTC) are Extracellular-facing. Met1067 and Leu1078 each carry phosphoserine. A helical membrane pass occupies residues 1097–1117 (LVLLWVIKASAAAVVFPMMVL). The tract at residues 1118-1140 (ALVFVRKLMDLCFTKRELSWLDD) is essential for interaction with RACK1. The Cytoplasmic segment spans residues 1118–1218 (ALVFVRKLMD…KKYMDAETSL (101 aa)). Residues 1138-1140 (LDD) are CA2-binding. Basic and acidic residues predominate over residues 1148-1165 (KKEDDKKKKEKEEAERML). The segment at 1148 to 1172 (KKEDDKKKKEKEEAERMLQGDGDTV) is disordered. Thr1171 bears the Phosphothreonine mark. Ser1180, Thr1188, Ile1201, and Ser1217 each carry phosphoserine. The PDZ-binding signature appears at 1215–1218 (ETSL).

The protein belongs to the anion exchanger (TC 2.A.31) family. In terms of assembly, interacts with USH1C. Forms a complex with ATP6V1B1 and NHERF1/EBP50. Interacts in a pH dependent-manner with CA2/carbonic anhydrase 2. Interacts with CFTR probably through NHERF1/EBP50. Interacts with RACK1. Post-translationally, undergoes lysosome-mediated degradation. N-glycosylated. As to expression, expressed in aorta, ventricles, atrium, mesenteric artery, kidney, spleen, duodenum, jejunum, ileum, colon, lung, trachea, gastric fundus and pylorus, cerebrum, cerebellum, pancreas, liver, parotid gland, and epididymis. Expressed in the inner ear by cochlear outer and inner hair cells (at protein level). Highly expressed in testis and spleen. In terms of tissue distribution, specifically expressed in kidney. Specifically expressed in hippocampal neurons.

It is found in the basolateral cell membrane. The protein localises to the apical cell membrane. The protein resides in the cell projection. It localises to the stereocilium. Its subcellular location is the cell membrane. The enzyme catalyses hydrogencarbonate(in) + Na(+)(in) = hydrogencarbonate(out) + Na(+)(out). With respect to regulation, insensitive to stilbene derivatives. In terms of biological role, electroneutral sodium- and bicarbonate-dependent cotransporter with a Na(+):HCO3(-) 1:1 stoichiometry. Mediates the sodium-dependent bicarbonate transport important for pH recovery after acid load as well as for regulation of steady-state pH in the duodenum and vascular smooth muscle cells. Plays a key role in macrophage acidification, mediating bicarbonate import into the cytoplasm which is crucial for net acid extrusion and maintenance of cytoplasmic pH during phagocytosis. Provides cellular bicarbonate for de novo purine and pyrimidine synthesis and is a key mediator of de novo nucleotide synthesis downstream of mTORC1 signaling in proliferating cells. In Rattus norvegicus (Rat), this protein is Sodium bicarbonate cotransporter 3 (Slc4a7).